Reading from the N-terminus, the 122-residue chain is Ribonuclease P protein component (122 aa).

It belongs to the RnpA family. As to quaternary structure, consists of a catalytic RNA component (M1 or rnpB) and a protein subunit.

The enzyme catalyses Endonucleolytic cleavage of RNA, removing 5'-extranucleotides from tRNA precursor.. Functionally, RNaseP catalyzes the removal of the 5'-leader sequence from pre-tRNA to produce the mature 5'-terminus. It can also cleave other RNA substrates such as 4.5S RNA. The protein component plays an auxiliary but essential role in vivo by binding to the 5'-leader sequence and broadening the substrate specificity of the ribozyme. This is Ribonuclease P protein component from Roseiflexus castenholzii (strain DSM 13941 / HLO8).